Reading from the N-terminus, the 264-residue chain is Indole-3-glycerol phosphate synthase (264 aa).

This sequence belongs to the TrpC family.

The enzyme catalyses 1-(2-carboxyphenylamino)-1-deoxy-D-ribulose 5-phosphate + H(+) = (1S,2R)-1-C-(indol-3-yl)glycerol 3-phosphate + CO2 + H2O. It functions in the pathway amino-acid biosynthesis; L-tryptophan biosynthesis; L-tryptophan from chorismate: step 4/5. In Stenotrophomonas maltophilia (strain R551-3), this protein is Indole-3-glycerol phosphate synthase.